Here is a 157-residue protein sequence, read N- to C-terminus: MAKKKSKKTPDNVLAQNRKARHDYTVLETVEAGIALTGTEIKSVRERRVNLQDGFAQIRNNEAWLMNVHISEYVQGNRFNHDPLRNRKLLLHKKEIRRLGQATMDKGVTLVPLRMYLKHGFAKVLIGVAQGKREFDKRETIKRREQDRQIARVMKHY.

This sequence belongs to the SmpB family.

The protein resides in the cytoplasm. Functionally, required for rescue of stalled ribosomes mediated by trans-translation. Binds to transfer-messenger RNA (tmRNA), required for stable association of tmRNA with ribosomes. tmRNA and SmpB together mimic tRNA shape, replacing the anticodon stem-loop with SmpB. tmRNA is encoded by the ssrA gene; the 2 termini fold to resemble tRNA(Ala) and it encodes a 'tag peptide', a short internal open reading frame. During trans-translation Ala-aminoacylated tmRNA acts like a tRNA, entering the A-site of stalled ribosomes, displacing the stalled mRNA. The ribosome then switches to translate the ORF on the tmRNA; the nascent peptide is terminated with the 'tag peptide' encoded by the tmRNA and targeted for degradation. The ribosome is freed to recommence translation, which seems to be the essential function of trans-translation. The chain is SsrA-binding protein from Levilactobacillus brevis (strain ATCC 367 / BCRC 12310 / CIP 105137 / JCM 1170 / LMG 11437 / NCIMB 947 / NCTC 947) (Lactobacillus brevis).